We begin with the raw amino-acid sequence, 36 residues long: Peptide POLARIS (36 aa).

This sequence belongs to the POLARIS peptide family. Mostly expressed in the embryonic root from the heart stage and in the seedling primary and lateral root tips, especially in the columella initials and lateral root cap. Also detectable in aerial parts of the seedling, sepals and leaves, principally in vascular tissues of the lamina and petiole.

Required for correct root growth and vascular development, probably by modulating both cell division rate in meristems and cell elongation in roots. Negative regulator of the ethylene signaling pathway that modulates microtubule cytoskeleton dynamics and auxin transport and homeostasis, and possibly cytokinin signaling, thus influencing root growth and lateral root development. In Arabidopsis thaliana (Mouse-ear cress), this protein is Peptide POLARIS (PLS).